The following is a 270-amino-acid chain: Type II restriction enzyme CeqI (270 aa).

It catalyses the reaction Endonucleolytic cleavage of DNA to give specific double-stranded fragments with terminal 5'-phosphates.. Its function is as follows. A P subtype restriction enzyme that recognizes the double-stranded sequence 5'-GATATC-3' and cleaves after T-3. The chain is Type II restriction enzyme CeqI (ceqIR) from Rhodococcus hoagii (Corynebacterium equii).